The following is a 376-amino-acid chain: Chaperone protein DnaJ (376 aa).

The J domain occupies 5-70; it reads DYYEVLGVGR…DKKAAYDQFG (66 aa). Residues 132-210 form a CR-type zinc finger; that stretch reads GLTKELRIPT…CHGEGRVEKS (79 aa). Residues C145, C148, C162, C165, C184, C187, C198, and C201 each contribute to the Zn(2+) site. CXXCXGXG motif repeat units lie at residues 145-152, 162-169, 184-191, and 198-205; these read CDLCDGSG, CGTCHGQG, CPTCHGRG, and CGKCHGEG.

Belongs to the DnaJ family. In terms of assembly, homodimer. The cofactor is Zn(2+).

The protein resides in the cytoplasm. In terms of biological role, participates actively in the response to hyperosmotic and heat shock by preventing the aggregation of stress-denatured proteins and by disaggregating proteins, also in an autonomous, DnaK-independent fashion. Unfolded proteins bind initially to DnaJ; upon interaction with the DnaJ-bound protein, DnaK hydrolyzes its bound ATP, resulting in the formation of a stable complex. GrpE releases ADP from DnaK; ATP binding to DnaK triggers the release of the substrate protein, thus completing the reaction cycle. Several rounds of ATP-dependent interactions between DnaJ, DnaK and GrpE are required for fully efficient folding. Also involved, together with DnaK and GrpE, in the DNA replication of plasmids through activation of initiation proteins. This Shewanella loihica (strain ATCC BAA-1088 / PV-4) protein is Chaperone protein DnaJ.